Consider the following 242-residue polypeptide: Cysteine-rich venom protein VAR11 (242 aa).

An N-terminal signal peptide occupies residues 1–19 (MILLKLYLTLAAILCQSRG). The SCP domain occupies 41–169 (NKHNDLRRTV…SLKYFQVCQY (129 aa)). Disulfide bonds link Cys-77–Cys-156, Cys-95–Cys-170, Cys-151–Cys-167, Cys-189–Cys-196, Cys-192–Cys-201, Cys-205–Cys-237, Cys-214–Cys-231, and Cys-223–Cys-235. The region spanning 205 to 237 (CAYNDDYTSCPDLTKQVGCNHPVTANCKASCQC) is the ShKT domain.

The protein belongs to the CRISP family. As to expression, expressed by the venom gland.

The protein localises to the secreted. Its function is as follows. Blocks ryanodine receptors, and potassium channels. In Varanus varius (Lace monitor lizard), this protein is Cysteine-rich venom protein VAR11.